The chain runs to 110 residues: MILVTTTPSVDGYTITNYQGIVFGEVVSGVNMFKDLGAGLRNMFGGRSQGYEEELMRARNEAIAEMQRRAEAMGAHAVVGVDIDYEVLGADNGMLMVTASGTAVQISRRA.

Belongs to the UPF0145 family.

This chain is UPF0145 protein Blon_0093/BLIJ_0092, found in Bifidobacterium longum subsp. infantis (strain ATCC 15697 / DSM 20088 / JCM 1222 / NCTC 11817 / S12).